The following is a 446-amino-acid chain: 3-phosphoshikimate 1-carboxyvinyltransferase (446 aa).

Residues K21, S22, and R26 each contribute to the 3-phosphoshikimate site. Phosphoenolpyruvate is bound at residue K21. Positions 92 and 120 each coordinate phosphoenolpyruvate. S165, Q166, D308, and K335 together coordinate 3-phosphoshikimate. Q166 is a binding site for phosphoenolpyruvate. D308 serves as the catalytic Proton acceptor. Residues R339, R380, and K406 each coordinate phosphoenolpyruvate.

The protein belongs to the EPSP synthase family. Monomer.

The protein resides in the cytoplasm. The catalysed reaction is 3-phosphoshikimate + phosphoenolpyruvate = 5-O-(1-carboxyvinyl)-3-phosphoshikimate + phosphate. The protein operates within metabolic intermediate biosynthesis; chorismate biosynthesis; chorismate from D-erythrose 4-phosphate and phosphoenolpyruvate: step 6/7. In terms of biological role, catalyzes the transfer of the enolpyruvyl moiety of phosphoenolpyruvate (PEP) to the 5-hydroxyl of shikimate-3-phosphate (S3P) to produce enolpyruvyl shikimate-3-phosphate and inorganic phosphate. In Chlamydia caviae (strain ATCC VR-813 / DSM 19441 / 03DC25 / GPIC) (Chlamydophila caviae), this protein is 3-phosphoshikimate 1-carboxyvinyltransferase.